The following is a 227-amino-acid chain: MQLCVALDLEKKEDNLSLLQELKGLDLWAKVGLRSFIRDGAVFLDEIRKIDGNFKIFLDLKLYDIPYTMANAALECAKLEVDMLTVHLSSAKSALTILMQRLNALKKRPLIMGVSALTSFSEEEFLSVYNAPLKTQAIKLSVMGKESGIDGVVCSVFESLAIKEALGKDFLTLTPGIRLNKNDKEDQERVANAKEAKQNLSDFIVVGRPIYQAKEPREVVLELLKDC.

Substrate is bound by residues Asp-8, Lys-30, 59-68 (DLKLYDIPYT), Thr-118, Arg-178, Gln-187, Gly-207, and Arg-208. The active-site Proton donor is the Lys-61.

The protein belongs to the OMP decarboxylase family. Type 1 subfamily. Homodimer.

It catalyses the reaction orotidine 5'-phosphate + H(+) = UMP + CO2. The protein operates within pyrimidine metabolism; UMP biosynthesis via de novo pathway; UMP from orotate: step 2/2. In terms of biological role, catalyzes the decarboxylation of orotidine 5'-monophosphate (OMP) to uridine 5'-monophosphate (UMP). The protein is Orotidine 5'-phosphate decarboxylase of Helicobacter pylori (strain Shi470).